Reading from the N-terminus, the 341-residue chain is Peptidoglycan recognition protein 3 (341 aa).

The N-terminal stretch at Met-1–Ala-17 is a signal peptide. 2 consecutive N-acetylmuramoyl-L-alanine amidase domains span residues Thr-77–Pro-179 and Pro-200–Pro-325. N-linked (GlcNAc...) asparagine glycosylation occurs at Asn-113. Disulfide bonds link Cys-178-Cys-300, Cys-194-Cys-238, and Cys-214-Cys-220. Peptidoglycan contacts are provided by His-231, Arg-235, and Tyr-242. The segment at His-264–Asn-269 is interaction with murein.

It belongs to the N-acetylmuramoyl-L-alanine amidase 2 family. Monomer. Homodimer; disulfide-linked. Heterodimer with PGLYRP4; disulfide-linked. In terms of processing, N-glycosylated. Detected in skin epidermis, eccrine sweat glands and ducts, ciliary body epithelial cells of the eye, in small intestine, colon, stomach and in mature epithelial cells of the tongue (at protein level). Highly expressed in skin and esophagus, expressed also in tonsils and thymus and to a much lesser extent in the stomach, descending colon, rectum and brain.

The protein localises to the secreted. Pattern receptor that binds to murein peptidoglycans (PGN) of Gram-positive bacteria. Has bactericidal activity towards Gram-positive bacteria. May kill Gram-positive bacteria by interfering with peptidoglycan biosynthesis. Also binds to Gram-negative bacteria, and has bacteriostatic activity towards Gram-negative bacteria. Plays a role in innate immunity. This chain is Peptidoglycan recognition protein 3 (PGLYRP3), found in Homo sapiens (Human).